The primary structure comprises 264 residues: MSKLKLHGFNNLTKSLSFCIYDICYAKTADDRDGYIAYIDEQYNANRLTEILSETCSIIGANILNIARQDYDPQGASVTILVSEEPVDPRDVDTSEHPGPLPSAVVAHLDKSHICVHTYPESHPEAGLCTFRADIEVSTCGVISPLKALNYLIHQLESDIVTMDYRVRGFTRDINGVKHFIDHKINSIQNFMSDDMKSLYHMMDVNVYQENIFHTKMMLKDFDLKHYLFNAKPEELSAEEKEQITCLLYKEMQEIYYGRNVPEV.

Ser112 (schiff-base intermediate with substrate; via pyruvic acid) is an active-site residue. At Ser112 the chain carries Pyruvic acid (Ser); by autocatalysis. The Proton acceptor; for processing activity role is filled by His117. Cys140 serves as the catalytic Proton donor; for catalytic activity.

It belongs to the prokaryotic AdoMetDC family. Type 2 subfamily. Heterooctamer of four alpha and four beta chains arranged as a tetramer of alpha/beta heterodimers. It depends on pyruvate as a cofactor. Post-translationally, is synthesized initially as an inactive proenzyme. Formation of the active enzyme involves a self-maturation process in which the active site pyruvoyl group is generated from an internal serine residue via an autocatalytic post-translational modification. Two non-identical subunits are generated from the proenzyme in this reaction, and the pyruvate is formed at the N-terminus of the alpha chain, which is derived from the carboxyl end of the proenzyme. The post-translation cleavage follows an unusual pathway, termed non-hydrolytic serinolysis, in which the side chain hydroxyl group of the serine supplies its oxygen atom to form the C-terminus of the beta chain, while the remainder of the serine residue undergoes an oxidative deamination to produce ammonia and the pyruvoyl group blocking the N-terminus of the alpha chain.

The enzyme catalyses S-adenosyl-L-methionine + H(+) = S-adenosyl 3-(methylsulfanyl)propylamine + CO2. It participates in amine and polyamine biosynthesis; S-adenosylmethioninamine biosynthesis; S-adenosylmethioninamine from S-adenosyl-L-methionine: step 1/1. Catalyzes the decarboxylation of S-adenosylmethionine to S-adenosylmethioninamine (dcAdoMet), the propylamine donor required for the synthesis of the polyamines spermine and spermidine from the diamine putrescine. This chain is S-adenosylmethionine decarboxylase proenzyme, found in Yersinia pseudotuberculosis serotype I (strain IP32953).